The sequence spans 161 residues: Inner membrane assembly complex subunit 17 (161 aa).

The transit peptide at 1 to 22 (MLNPRPCVPRLLSAVARCHKPY) directs the protein to the mitochondrion. Residues 23–84 (STSIKSLEDL…QQQQQALKKF (62 aa)) lie on the Mitochondrial matrix side of the membrane. Residues 85-107 (VRPMWIFLLMSSFFYLTGHYIWW) traverse the membrane as a helical segment. The Mitochondrial intermembrane portion of the chain corresponds to 108-161 (KLEYDEREIELHKQVQALRQELDSAIAAKHSGKEPALSGAGAKKPKRWYLAWLW). Positions 109–138 (LEYDEREIELHKQVQALRQELDSAIAAKHS) form a coiled coil.

This sequence belongs to the INA17 family. As to quaternary structure, component of the inner membrane assembly (INA) complex, composed of INA17 and INA22. Interacts with a subset of F(1)F(0)-ATP synthase subunits of the F(1)-domain and the peripheral stalk.

The protein localises to the mitochondrion inner membrane. Component of the INA complex (INAC) that promotes the biogenesis of mitochondrial F(1)F(0)-ATP synthase. INAC facilitates the assembly of the peripheral stalk and promotes the assembly of the catalytic F(1)-domain with the membrane-embedded F(0)-domain. The polypeptide is Inner membrane assembly complex subunit 17 (Lachancea thermotolerans (strain ATCC 56472 / CBS 6340 / NRRL Y-8284) (Yeast)).